The following is a 459-amino-acid chain: Cysteine--tRNA ligase (459 aa).

Zn(2+) is bound at residue C28. A 'HIGH' region motif is present at residues 30-40 (VTVYDLCHIGH). Residues C209, H234, and E238 each contribute to the Zn(2+) site. The 'KMSKS' region motif lies at 266-270 (KMSKS). Position 269 (K269) interacts with ATP.

Belongs to the class-I aminoacyl-tRNA synthetase family. As to quaternary structure, monomer. Zn(2+) serves as cofactor.

Its subcellular location is the cytoplasm. The catalysed reaction is tRNA(Cys) + L-cysteine + ATP = L-cysteinyl-tRNA(Cys) + AMP + diphosphate. This is Cysteine--tRNA ligase from Haemophilus influenzae (strain 86-028NP).